Here is a 421-residue protein sequence, read N- to C-terminus: MRKIGLAWQIFIGLILGIIVGAIFYGNPKVATYLQPIGDIFLRLIKMIVIPIVISSLVVGVASVGDLKKLGKLGGKTIIYFEIITTIAIVVGLLAANIFQPGTGVNMKSLEKTDIQSYVDTTNEVQHHSMVETFVNIVPKNIFESLTKGDMLPIIFFSVMFGLGVAAIGEKGKPVLQFFQGTAEAMFYVTNQIMKFAPFGVFALIGVTVSKFGVESLIPLSKLVIVVYATMVFFIFVVLGGVAKLFGINIFHIIKILKDELILAYSTASSETVLPKIMEKMENFGCPKAITSFVIPTGYSFNLDGSTLYQALAAIFIAQLYGIDMPISQQISLLLVLMVTSKGIAGVPGVSFVVLLATLGTVGIPIEGLAFIAGIDRILDMARTAVNVIGNSLAAIIMSKWEGQYNEEKGKQYIAQLQQSA.

At 1–3 (MRK) the chain is on the cytoplasmic side. Residues 4–24 (IGLAWQIFIGLILGIIVGAIF) traverse the membrane as a helical segment. Over 25 to 43 (YGNPKVATYLQPIGDIFLR) the chain is Extracellular. A helical membrane pass occupies residues 44 to 64 (LIKMIVIPIVISSLVVGVASV). Over 65–77 (GDLKKLGKLGGKT) the chain is Cytoplasmic. A helical transmembrane segment spans residues 78–98 (IIYFEIITTIAIVVGLLAANI). Residues 99 to 148 (FQPGTGVNMKSLEKTDIQSYVDTTNEVQHHSMVETFVNIVPKNIFESLTK) are Extracellular-facing. The helical transmembrane segment at 149-169 (GDMLPIIFFSVMFGLGVAAIG) threads the bilayer. The Cytoplasmic portion of the chain corresponds to 170-198 (EKGKPVLQFFQGTAEAMFYVTNQIMKFAP). The helical transmembrane segment at 199–219 (FGVFALIGVTVSKFGVESLIP) threads the bilayer. At 220 to 222 (LSK) the chain is on the extracellular side. A helical membrane pass occupies residues 223–243 (LVIVVYATMVFFIFVVLGGVA). A topological domain (cytoplasmic) is located at residue lysine 244. The chain crosses the membrane as a helical span at residues 245 to 265 (LFGINIFHIIKILKDELILAY). Residues 266-306 (STASSETVLPKIMEKMENFGCPKAITSFVIPTGYSFNLDGS) lie on the Extracellular side of the membrane. The helical transmembrane segment at 307–327 (TLYQALAAIFIAQLYGIDMPI) threads the bilayer. Over 328–330 (SQQ) the chain is Cytoplasmic. 2 helical membrane passes run 331 to 351 (ISLL…PGVS) and 352 to 372 (FVVL…LAFI). The Cytoplasmic segment spans residues 373 to 421 (AGIDRILDMARTAVNVIGNSLAAIIMSKWEGQYNEEKGKQYIAQLQQSA).

It belongs to the dicarboxylate/amino acid:cation symporter (DAACS) (TC 2.A.23) family. In terms of assembly, homotrimer.

The protein resides in the cell membrane. Its function is as follows. This carrier protein is part of the Na(+)-dependent, binding-protein-independent glutamate-aspartate transport system. This chain is Proton/sodium-glutamate symport protein (gltT), found in Geobacillus stearothermophilus (Bacillus stearothermophilus).